The sequence spans 155 residues: Large ribosomal subunit protein bL9c (155 aa).

This sequence belongs to the bacterial ribosomal protein bL9 family.

It is found in the plastid. The protein localises to the chloroplast. In terms of biological role, binds to the 23S rRNA. The sequence is that of Large ribosomal subunit protein bL9c from Porphyra purpurea (Red seaweed).